Reading from the N-terminus, the 779-residue chain is Ribosome-releasing factor 2, mitochondrial (779 aa).

The tr-type G domain maps to 68 to 353 (AKIRNIGIMA…AVTTYLPSPE (286 aa)). Residues 77 to 84 (AHIDAGKT), 141 to 145 (DTPGH), and 195 to 198 (NKMD) each bind GTP.

Belongs to the TRAFAC class translation factor GTPase superfamily. Classic translation factor GTPase family. EF-G/EF-2 subfamily.

It is found in the mitochondrion. It catalyses the reaction GTP + H2O = GDP + phosphate + H(+). Its function is as follows. Mitochondrial GTPase that mediates the disassembly of ribosomes from messenger RNA at the termination of mitochondrial protein biosynthesis. Acts in collaboration with MRRF. GTP hydrolysis follows the ribosome disassembly and probably occurs on the ribosome large subunit. Not involved in the GTP-dependent ribosomal translocation step during translation elongation. In Rattus norvegicus (Rat), this protein is Ribosome-releasing factor 2, mitochondrial (Gfm2).